Here is a 67-residue protein sequence, read N- to C-terminus: UPF0434 protein Bcep1808_2639 (67 aa).

The protein belongs to the UPF0434 family.

The sequence is that of UPF0434 protein Bcep1808_2639 from Burkholderia vietnamiensis (strain G4 / LMG 22486) (Burkholderia cepacia (strain R1808)).